Reading from the N-terminus, the 213-residue chain is MKLGKIALAMTALIAGTTAFAGTITGSSNVTFLAFDGQKVRRNTNLQVNDTNLHQVVVEISSIYQSGSDSAFFESQPIILTFEGSTEDIKILAPSLNSEFDIAQFKKSPSFKIETVSGKKLTYKQDFLKGEGFMPNSNIINNLANYNIGEGVAAVQKFALSTMPITMANNTNKVNKGKIVVQGENVTEQQLQYWFQQADKETQKRFLDWAKKQ.

Positions 1 to 21 (MKLGKIALAMTALIAGTTAFA) are cleaved as a signal peptide.

This sequence belongs to the UPF0319 family.

In Glaesserella parasuis serovar 5 (strain SH0165) (Haemophilus parasuis), this protein is UPF0319 protein HAPS_0727.